Consider the following 275-residue polypeptide: Hydroxyethylthiazole kinase (275 aa).

Residue M50 participates in substrate binding. Residues R126 and S171 each contribute to the ATP site. Residue A200 coordinates substrate.

It belongs to the Thz kinase family. The cofactor is Mg(2+).

The enzyme catalyses 5-(2-hydroxyethyl)-4-methylthiazole + ATP = 4-methyl-5-(2-phosphooxyethyl)-thiazole + ADP + H(+). It participates in cofactor biosynthesis; thiamine diphosphate biosynthesis; 4-methyl-5-(2-phosphoethyl)-thiazole from 5-(2-hydroxyethyl)-4-methylthiazole: step 1/1. Functionally, catalyzes the phosphorylation of the hydroxyl group of 4-methyl-5-beta-hydroxyethylthiazole (THZ). This is Hydroxyethylthiazole kinase from Acinetobacter baumannii (strain ATCC 17978 / DSM 105126 / CIP 53.77 / LMG 1025 / NCDC KC755 / 5377).